We begin with the raw amino-acid sequence, 206 residues long: Transcription antitermination protein NusB (206 aa).

Positions 135–206 (ARGEKTSAQE…ETQPPGVNEV (72 aa)) are disordered. Positions 169-180 (ATPATTPVTTTV) are enriched in low complexity.

It belongs to the NusB family.

Involved in transcription antitermination. Required for transcription of ribosomal RNA (rRNA) genes. Binds specifically to the boxA antiterminator sequence of the ribosomal RNA (rrn) operons. The sequence is that of Transcription antitermination protein NusB from Heliobacterium modesticaldum (strain ATCC 51547 / Ice1).